The following is a 171-amino-acid chain: Endoribonuclease YbeY (171 aa).

Zn(2+)-binding residues include His-130, His-134, and His-140.

The protein belongs to the endoribonuclease YbeY family. Requires Zn(2+) as cofactor.

It is found in the cytoplasm. Functionally, single strand-specific metallo-endoribonuclease involved in late-stage 70S ribosome quality control and in maturation of the 3' terminus of the 16S rRNA. The chain is Endoribonuclease YbeY from Neisseria meningitidis serogroup A / serotype 4A (strain DSM 15465 / Z2491).